Here is a 462-residue protein sequence, read N- to C-terminus: Cytochrome P450 20A1 (462 aa).

Residues 4 to 24 (FAIFAVTFLLALVGAVLYLYP) traverse the membrane as a helical segment. Cys-409 lines the heme pocket.

This sequence belongs to the cytochrome P450 family. It depends on heme as a cofactor.

The protein localises to the membrane. This chain is Cytochrome P450 20A1 (CYP20A1), found in Homo sapiens (Human).